Consider the following 403-residue polypeptide: MEELGLATAKVTVTKEASHHREADLYQKMKSLESKLDFFNIQEEYIKYEYKNLKRELLHAQEEVKRIRSVPLLIGQLLEMVDSNTGIVQSTSGSTLCVRILSTIDRELLKPSASVALQRHSNALVDTLPPESDSSIHLLGADEKPSESYSDIGGGDIQKQEMREAVELPLTHHNLYKQIGIDPPRGVLLYGPPGTGKTMLAKAVAHHTSAAFIRVVGSEFVQKYLGEGPRLVRDVFRLARENSPAIIFIDEIDAIATKRFDAQTGADREVQRILMELLNQMDGFDVSVNVKVIMATNRQDTLDPALLRPGRLDRKIEFPLPDRRQKRLIFQVITSKMNLSDEVDLEDYVSRPDKLSGAEIQSICQEAGMHAIRKNRYVILPKDFEKGYKASIKKNTHEFNFYN.

Position 1 is an N-acetylmethionine (Met-1). 191–198 (GPPGTGKT) contacts ATP.

It belongs to the AAA ATPase family.

It is found in the cytoplasm. Its subcellular location is the nucleus. The 26S proteasome is involved in the ATP-dependent degradation of ubiquitinated proteins. The regulatory (or ATPase) complex confers ATP dependency and substrate specificity to the 26S complex. The polypeptide is 26S proteasome regulatory subunit 6B homolog (psmC4) (Dictyostelium discoideum (Social amoeba)).